The sequence spans 479 residues: Chromosomal replication initiator protein DnaA (479 aa).

The interval 1-94 (MKGGTMVENA…QTLWRTERED (94 aa)) is domain I, interacts with DnaA modulators. The segment at 94–142 (DIKGVELQVKRGLPEVSMGDAEDGEDGSGEGHELATQAAAPESRSDLAV) is domain II. The disordered stretch occupies residues 106 to 137 (LPEVSMGDAEDGEDGSGEGHELATQAAAPESR). Residues 143-359 (PLDPRFTFDT…GALNRLIAHA (217 aa)) form a domain III, AAA+ region region. ATP-binding residues include Gly188, Gly190, Lys191, and Thr192. The tract at residues 360–479 (DLVGRPVTLD…VELLRRMLEG (120 aa)) is domain IV, binds dsDNA.

It belongs to the DnaA family. As to quaternary structure, oligomerizes as a right-handed, spiral filament on DNA at oriC.

Its subcellular location is the cytoplasm. Plays an essential role in the initiation and regulation of chromosomal replication. ATP-DnaA binds to the origin of replication (oriC) to initiate formation of the DNA replication initiation complex once per cell cycle. Binds the DnaA box (a 9 base pair repeat at the origin) and separates the double-stranded (ds)DNA. Forms a right-handed helical filament on oriC DNA; dsDNA binds to the exterior of the filament while single-stranded (ss)DNA is stabiized in the filament's interior. The ATP-DnaA-oriC complex binds and stabilizes one strand of the AT-rich DNA unwinding element (DUE), permitting loading of DNA polymerase. After initiation quickly degrades to an ADP-DnaA complex that is not apt for DNA replication. Binds acidic phospholipids. This Gluconobacter oxydans (strain 621H) (Gluconobacter suboxydans) protein is Chromosomal replication initiator protein DnaA.